The chain runs to 500 residues: MATTPRLASLLLLLALCAAAAGALRLPPDASFPGAQAERLIRALNLLPGRPRRGLGAGAEDVAPGQLLERRVTLPGLPEGVGDLGHHAGYYRLPNTHDARMFYFFFESRGKKEDPVVIWLTGGPGCSSELAVFYENGPFTIANNMSLVWNKFGWDKISNIIFVDPATGTGFSYSSDDRDTRHDEAGVSNDLYDFLQVFFKKHPEFVKNDFFITGESYAGHYIPAFASRVHQGNKKNEGTHINLKGFAIGNGLTDPAIQYKAYTDYALDMNLIQKADYDRINKFIPPCEFAIKLCGTDGKASCMAAYMVCNSIFNSIMKLVGTKNYYDVRKECEGKLCYDFSNLEKFFGDKAVRQAIGVGDIEFVSCSTSVYQAMLTDWMRNLEVGIPALLEDGINVLIYAGEYDLICNWLGNSRWVHSMEWSGQKDFAKTAESSFLVDDAQAGVLKSHGALSFLKVHNAGHMVPMDQPKAALEMLRRFTQGKLKESVPEEEPATTFYAAI.

The signal sequence occupies residues 1–21; the sequence is MATTPRLASLLLLLALCAAAA. Positions 22 to 73 are excised as a propeptide; the sequence is GALRLPPDASFPGAQAERLIRALNLLPGRPRRGLGAGAEDVAPGQLLERRVT. 3 disulfide bridges follow: cysteine 126–cysteine 366, cysteine 294–cysteine 309, and cysteine 332–cysteine 337. N-linked (GlcNAc...) asparagine glycosylation is present at asparagine 144. The active site involves serine 216. Aspartate 404 is a catalytic residue. Cysteine 407 contributes to the substrate binding site. Histidine 461 is an active-site residue. Positions 485-500 are excised as a propeptide; sequence ESVPEEEPATTFYAAI.

This sequence belongs to the peptidase S10 family. As to quaternary structure, monomer.

It carries out the reaction Release of a C-terminal amino acid with broad specificity.. The chain is Serine carboxypeptidase 3 (CBP3) from Triticum aestivum (Wheat).